The sequence spans 332 residues: Small ribosomal subunit protein uS2 (332 aa).

It belongs to the universal ribosomal protein uS2 family.

The chain is Small ribosomal subunit protein uS2 from Nitrobacter winogradskyi (strain ATCC 25391 / DSM 10237 / CIP 104748 / NCIMB 11846 / Nb-255).